The following is a 1295-amino-acid chain: Serine protease pet autotransporter (1295 aa).

An N-terminal signal peptide occupies residues 1–52 (MNKIYSIKYSAATGGLIAVSELAKKVICKTNRKISAALLSLAVISYTNIIYA). One can recognise a Peptidase S6 domain in the interval 54–304 (NMDISKAWAR…TPFDSKTTNE (251 aa)). Active-site charge relay system residues include His-124, Asp-153, and Ser-260. The region spanning 1029–1295 (DINGEAGAWA…AINANFRYSF (267 aa)) is the Autotransporter domain.

In terms of processing, cleaved to release the mature protein from the outer membrane.

The protein resides in the periplasm. It localises to the secreted. The protein localises to the cell surface. Its subcellular location is the cell outer membrane. With respect to regulation, inhibition of cytotoxic activity by phenylmethylsulfonyl fluoride. In terms of biological role, serine protease with enterotoxic and cytotoxic activity. Internalization into the host cell is required for the induction of cytopathic effects. However, the serine activity is not necessary for secretion and internalization into the host cell. The polypeptide is Serine protease pet autotransporter (pet) (Escherichia coli O44:H18 (strain 042 / EAEC)).